A 447-amino-acid chain; its full sequence is MTAHEVNFDGLVGLTHHYAGLSFGNEASTRHRFQVSNPRLAVKQGLLKMKALADAGFLQAVIPPHERPFIPALRQLGFTGSDEQILDKVARQAPRWLSRVSSASPMWVANAATVCPSADALDGKVHLTVANLNNKFHRALEAPVTEALLRAIFRDENQFSVHSALPQVALLGDEGAANHNRLGGEYGSAGVQLFVYGREEENEIRPARYPARQSREASEAVARLNQVNPQQVIFAQQNPEVIDQGVFHNDVIAVSNRQVLFCHEAAFARQKVLINQLRTRVDGFMAIEVPAEEVSVSDAVATYLFNSQLLSRDDGSMLLVLPRECQDHAGVWRYLNKLVAEDNPIIAIQVFDLRESMANGGGPACLRLRVVLTEEERRAVNPAVMMNDALFTALNAWADRYYRDRLTAADLADPLLLREGREALDVLTRLLDLGSVYPFQQTGAADG.

Residues 19–28 (AGLSFGNEAS), N110, and 137–138 (HR) contribute to the substrate site. E174 is an active-site residue. Substrate is bound at residue R212. The active site involves H248. Substrate-binding residues include D250 and N359. C365 (nucleophile) is an active-site residue.

The protein belongs to the succinylarginine dihydrolase family. Homodimer.

The enzyme catalyses N(2)-succinyl-L-arginine + 2 H2O + 2 H(+) = N(2)-succinyl-L-ornithine + 2 NH4(+) + CO2. The protein operates within amino-acid degradation; L-arginine degradation via AST pathway; L-glutamate and succinate from L-arginine: step 2/5. In terms of biological role, catalyzes the hydrolysis of N(2)-succinylarginine into N(2)-succinylornithine, ammonia and CO(2). This chain is N-succinylarginine dihydrolase, found in Salmonella gallinarum (strain 287/91 / NCTC 13346).